Here is a 1033-residue protein sequence, read N- to C-terminus: MMKSDEGVSGNSNNNNNYKFKDNTFRKYGVEVVAYDNNNNNNNNNNNNDDNNTVTVNSRGFHISIHPFSFRNKLTINQNNGSIGGSSSSSSTSNSVSTPKPQSFYVDDAGIAKQLNQSVFDILSRSRYLSSLSHENLAEFIAAEPSQKHHDQMLIVSEDYKNSLEKQIEIQAKRQTPIPSNTIGRYAYQILKALSYLHSQDLTHRSLSLDNIKLDDNNQIKLTNYGLYYLSDHGENVSFPIGNLLYLSPESILRGAKGSSNTKADVWALGCILLHICLGYCIWQDNNPSIVTNRILHLSGYSTTQSFNSISKSFEQCELKKTIINEKQHEEYEEYDDDEDISEEEKEKRIKDIKLNNRDNMNNFINSLKREEKENSDSNSGSSNSNIGIGLNGLGKELIEIIEQCLIPNPMDRPDSETLLDHPYFNEYKNIDPYQLQWIIKPFTKSWDLPDSLESLTLKEIESYGHIGSDNNGGGGGGGGESDSDIYSGKEIYYFWKLLGGNIEKELVNKGFAKASPSVHKLPLYVPVKASLTESTNSGLNSPQPYQHQHHQHQHQHQHPNIIKSKNSTVYNNEFCLVELSNVFLKIKESFKLYGSKVFEEGIEQSNNNNNNRFNNIENNIELQIIIIREFHKLLYQYQYDDPTLSQPKIYRLAKLFVPPILRGDIWSSILGVNEREAKQLYNSINLDVKGPNDKQFELDIPRCHQYHPLLSSRQGHVQLFKILKAWSLLNLEKGCYWQGLDNVASPFLVHHFFNEPIAFASLKAFVDKYLSILYVPNNHAALSEIMLIYQQLLAYHDPELLNHLMDIQLDPNLYSIPWFITVFAHILPIDKLEILWDSILLCPSSLPNFIAASMIIQFRDSILKMNFEDGITMMSMIPSVDVHKCVSDALSMFNKTPLSTTVTKFVSNTDQELWWMQEVPFEKRKLELFPRIDIHDLINDQQKVILDIRTPLQFQQIHYPSSINVNPKLSKLQQQMEQYKGQQIVVIAPKDQGVDFTNQLIQWKFPFVSMLNGGMDSLEHGAHSLLIISNKN.

Disordered regions lie at residues 1-21 (MMKS…YKFK), 35-55 (YDNN…NTVT), and 81-101 (GSIG…TPKP). Composition is skewed to low complexity over residues 36 to 52 (DNNN…DDNN) and 81 to 97 (GSIG…NSVS). Residues 72–425 (NKLTINQNNG…SETLLDHPYF (354 aa)) enclose the Protein kinase domain. ATP contacts are provided by residues 78-86 (QNNGSIGGS) and Lys113. Positions 535–546 (STNSGLNSPQPY) are enriched in polar residues. A disordered region spans residues 535 to 560 (STNSGLNSPQPYQHQHHQHQHQHQHP). Over residues 548-558 (HQHHQHQHQHQ) the composition is skewed to basic residues. Residues 657–844 (FVPPILRGDI…ILWDSILLCP (188 aa)) enclose the Rab-GAP TBC domain.

This sequence belongs to the protein kinase superfamily. Ser/Thr protein kinase family.

In Dictyostelium discoideum (Social amoeba), this protein is TBC domain-containing protein kinase-like protein (tbck).